Reading from the N-terminus, the 290-residue chain is Elongation factor Ts (290 aa).

Positions 82 to 85 are involved in Mg(2+) ion dislocation from EF-Tu; it reads TDFV.

This sequence belongs to the EF-Ts family.

Its subcellular location is the cytoplasm. Its function is as follows. Associates with the EF-Tu.GDP complex and induces the exchange of GDP to GTP. It remains bound to the aminoacyl-tRNA.EF-Tu.GTP complex up to the GTP hydrolysis stage on the ribosome. In Thiobacillus denitrificans (strain ATCC 25259 / T1), this protein is Elongation factor Ts.